Reading from the N-terminus, the 633-residue chain is Putative ankyrin repeat protein L774 (633 aa).

ANK repeat units follow at residues 91–120 (IYGH…EYDP), 123–152 (NCDD…FFKI), 221–250 (NVNK…EYDF), 252–275 (TILK…ILDS), 338–367 (DYDV…DVNN), 369–393 (MTYA…TLST), and 517–546 (DNLK…NSND).

The chain is Putative ankyrin repeat protein L774 from Acanthamoeba polyphaga mimivirus (APMV).